Consider the following 294-residue polypeptide: Acetyl-coenzyme A carboxylase carboxyl transferase subunit beta (294 aa).

Residues 29–294 (LWEKCPECGQ…TQEVKLQTNA (266 aa)) enclose the CoA carboxyltransferase N-terminal domain. 4 residues coordinate Zn(2+): Cys33, Cys36, Cys52, and Cys55. The C4-type zinc-finger motif lies at 33–55 (CPECGQVVYRKDLIDNCSVCSNC).

It belongs to the AccD/PCCB family. Acetyl-CoA carboxylase is a heterohexamer composed of biotin carboxyl carrier protein (AccB), biotin carboxylase (AccC) and two subunits each of ACCase subunit alpha (AccA) and ACCase subunit beta (AccD). Requires Zn(2+) as cofactor.

Its subcellular location is the cytoplasm. The enzyme catalyses N(6)-carboxybiotinyl-L-lysyl-[protein] + acetyl-CoA = N(6)-biotinyl-L-lysyl-[protein] + malonyl-CoA. The protein operates within lipid metabolism; malonyl-CoA biosynthesis; malonyl-CoA from acetyl-CoA: step 1/1. Component of the acetyl coenzyme A carboxylase (ACC) complex. Biotin carboxylase (BC) catalyzes the carboxylation of biotin on its carrier protein (BCCP) and then the CO(2) group is transferred by the transcarboxylase to acetyl-CoA to form malonyl-CoA. This is Acetyl-coenzyme A carboxylase carboxyl transferase subunit beta from Prochlorococcus marinus (strain NATL1A).